The chain runs to 204 residues: Dof zinc finger protein DOF3.1 (204 aa).

The interval 1-25 (MQDPAAYYQTMMAKQQQQQQPQFAE) is disordered. A Dof-type zinc finger spans residues 29-83 (LKCPRCDSPNTKFCYYNNYNLSQPRHFCKSCRRYWTKGGALRNVPVGGGSRKNAT). C31, C34, C56, and C59 together coordinate Zn(2+). Disordered stretches follow at residues 70-128 (RNVP…TRML) and 182-204 (RTEP…AEKN). The segment covering 84-102 (KRSTSSSSSASSPSNSSQN) has biased composition (low complexity). The segment covering 106 to 124 (KNPDPDPDPRNSQKPDLDP) has biased composition (basic and acidic residues).

It localises to the nucleus. In terms of biological role, transcription factor that binds specifically to a 5'-AA[AG]G-3' consensus core sequence. The protein is Dof zinc finger protein DOF3.1 (DOF3.1) of Arabidopsis thaliana (Mouse-ear cress).